Here is a 155-residue protein sequence, read N- to C-terminus: Glycosylation-dependent cell adhesion molecule 1 (155 aa).

Residues 1-18 (MKFFAVLLLASLAATSLA) form the signal peptide. Threonine 34 carries an O-linked (GalNAc...) threonine glycan. Phosphoserine occurs at positions 48, 53, 57, 59, and 65. A disordered region spans residues 74-109 (ARRHQNQNPKLLHPVPQESSFRNTATQSEETKELTP). Over residues 90–101 (QESSFRNTATQS) the composition is skewed to polar residues.

The protein belongs to the PP3/GlyCAM-1 family. As to expression, highly expressed in whey fraction of camel milk.

The chain is Glycosylation-dependent cell adhesion molecule 1 (GLYCAM1) from Camelus dromedarius (Dromedary).